We begin with the raw amino-acid sequence, 337 residues long: Probable tyrosine--tRNA ligase, cytoplasmic (337 aa).

Position 35 (Y35) interacts with L-tyrosine. Positions 40–48 (ITGKPHIAY) match the 'HIGH' region motif. Residues Y162, Q166, D169, and Q184 each contribute to the L-tyrosine site. The 'KMSKS' region signature appears at 218–222 (KMSSS).

Belongs to the class-I aminoacyl-tRNA synthetase family. As to quaternary structure, homodimer.

The protein resides in the cytoplasm. The enzyme catalyses tRNA(Tyr) + L-tyrosine + ATP = L-tyrosyl-tRNA(Tyr) + AMP + diphosphate + H(+). In Encephalitozoon cuniculi (strain GB-M1) (Microsporidian parasite), this protein is Probable tyrosine--tRNA ligase, cytoplasmic.